Here is a 773-residue protein sequence, read N- to C-terminus: Phenylalanine--tRNA ligase beta subunit (773 aa).

A tRNA-binding domain is found at 39–150 (LKAPDKVVVG…GKLELGRPLN (112 aa)). A B5 domain is found at 391–467 (KELPIIPISI…RIIGIDNIAS (77 aa)). Mg(2+)-binding residues include D445, D451, E454, and E455. The region spanning 682–773 (SKFPAITRDL…TLKNLGLDLR (92 aa)) is the FDX-ACB domain.

The protein belongs to the phenylalanyl-tRNA synthetase beta subunit family. Type 1 subfamily. As to quaternary structure, tetramer of two alpha and two beta subunits. Requires Mg(2+) as cofactor.

It localises to the cytoplasm. The catalysed reaction is tRNA(Phe) + L-phenylalanine + ATP = L-phenylalanyl-tRNA(Phe) + AMP + diphosphate + H(+). This chain is Phenylalanine--tRNA ligase beta subunit, found in Campylobacter jejuni (strain RM1221).